The following is a 911-amino-acid chain: DNA ligase 4 (911 aa).

ATP contacts are provided by glutamate 271, threonine 272, lysine 273, leucine 274, arginine 278, glutamate 331, lysine 345, phenylalanine 367, glutamate 427, lysine 432, lysine 449, and lysine 451. Residue lysine 273 is the N6-AMP-lysine intermediate of the active site. Residue glutamate 331 coordinates Mg(2+). Glutamate 427 serves as a coordination point for Mg(2+). The required for catalytic activity stretch occupies residues 610 to 620; that stretch reads LASKHFYVGGD. 2 consecutive BRCT domains span residues 654–743 and 808–911; these read KISN…PHFM and SPLS…QYLI.

This sequence belongs to the ATP-dependent DNA ligase family. As to quaternary structure, interacts with XRCC4; the LIG4-XRCC4 subcomplex has a 1:2 stoichiometry and XRCC4 is required for LIG4 stability. Component of the core long-range non-homologous end joining (NHEJ) complex (also named DNA-PK complex) composed of PRKDC, LIG4, XRCC4, XRCC6/Ku70, XRCC5/Ku86 and NHEJ1/XLF. Additional component of the NHEJ complex includes PAXX. Following autophosphorylation, PRKDC dissociates from DNA, leading to formation of the short-range NHEJ complex, composed of LIG4, XRCC4, XRCC6/Ku70, XRCC5/Ku86 and NHEJ1/XLF. Interacts with DCLRE1C; the interaction is direct. Interacts with APLF. Mg(2+) serves as cofactor.

It is found in the nucleus. The enzyme catalyses ATP + (deoxyribonucleotide)n-3'-hydroxyl + 5'-phospho-(deoxyribonucleotide)m = (deoxyribonucleotide)n+m + AMP + diphosphate.. Functionally, DNA ligase involved in DNA non-homologous end joining (NHEJ); required for double-strand break (DSB) repair and V(D)J recombination. Catalyzes the NHEJ ligation step of the broken DNA during DSB repair by resealing the DNA breaks after the gap filling is completed. Joins single-strand breaks in a double-stranded polydeoxynucleotide in an ATP-dependent reaction. LIG4 is mechanistically flexible: it can ligate nicks as well as compatible DNA overhangs alone, while in the presence of XRCC4, it can ligate ends with 2-nucleotides (nt) microhomology and 1-nt gaps. Forms a subcomplex with XRCC4; the LIG4-XRCC4 subcomplex is responsible for the NHEJ ligation step and XRCC4 enhances the joining activity of LIG4. Binding of the LIG4-XRCC4 complex to DNA ends is dependent on the assembly of the DNA-dependent protein kinase complex DNA-PK to these DNA ends. LIG4 regulates nuclear localization of XRCC4. The protein is DNA ligase 4 of Pongo abelii (Sumatran orangutan).